The sequence spans 139 residues: Putative flagella-related protein F (139 aa).

The N-terminal stretch at 1–18 (MGFSSVVGATVMIIALLV) is a signal peptide. The residue at position 19 (C19) is an N-acetylcysteine. The S-archaeol cysteine moiety is linked to residue C19.

To M.voltae FlaF.

The protein resides in the archaeal flagellum. Its subcellular location is the membrane. The chain is Putative flagella-related protein F (flaF) from Methanocaldococcus jannaschii (strain ATCC 43067 / DSM 2661 / JAL-1 / JCM 10045 / NBRC 100440) (Methanococcus jannaschii).